The chain runs to 293 residues: tRNA-cytidine(32) 2-sulfurtransferase (293 aa).

The PP-loop motif signature appears at 71 to 76 (SGGKDS). Positions 146, 149, and 237 each coordinate [4Fe-4S] cluster.

Belongs to the TtcA family. In terms of assembly, homodimer. Requires Mg(2+) as cofactor. The cofactor is [4Fe-4S] cluster.

Its subcellular location is the cytoplasm. The enzyme catalyses cytidine(32) in tRNA + S-sulfanyl-L-cysteinyl-[cysteine desulfurase] + AH2 + ATP = 2-thiocytidine(32) in tRNA + L-cysteinyl-[cysteine desulfurase] + A + AMP + diphosphate + H(+). The protein operates within tRNA modification. Its function is as follows. Catalyzes the ATP-dependent 2-thiolation of cytidine in position 32 of tRNA, to form 2-thiocytidine (s(2)C32). The sulfur atoms are provided by the cysteine/cysteine desulfurase (IscS) system. The polypeptide is tRNA-cytidine(32) 2-sulfurtransferase (Sinorhizobium medicae (strain WSM419) (Ensifer medicae)).